The primary structure comprises 108 residues: Protein S100-A15A (108 aa).

An EF-hand domain is found at 53 to 88 (KEPYYITELFQAADKNKDNQICFDEFLYILGKLVKD). The Ca(2+) site is built by Asp66, Asn68, Asp70, Gln72, and Glu77.

It belongs to the S-100 family.

The polypeptide is Protein S100-A15A (S100A15A) (Pongo abelii (Sumatran orangutan)).